The primary structure comprises 120 residues: Photosystem II extrinsic protein U (120 aa).

The first 29 residues, 1–29 (MKRLLSLLTGVLVMTGLLMALIFPQSAYA), serve as a signal peptide directing secretion.

This sequence belongs to the PsbU family. In terms of assembly, PSII is composed of 1 copy each of membrane proteins PsbA, PsbB, PsbC, PsbD, PsbE, PsbF, PsbH, PsbI, PsbJ, PsbK, PsbL, PsbM, PsbT, PsbX, PsbY, Psb30/Ycf12, peripheral proteins PsbO, CyanoQ (PsbQ), PsbU, PsbV and a large number of cofactors. It forms dimeric complexes.

It localises to the cellular thylakoid membrane. Functionally, one of the extrinsic, lumenal subunits of photosystem II (PSII). PSII is a light-driven water plastoquinone oxidoreductase, using light energy to abstract electrons from H(2)O, generating a proton gradient subsequently used for ATP formation. The extrinsic proteins stabilize the structure of photosystem II oxygen-evolving complex (OEC), the ion environment of oxygen evolution and protect the OEC against heat-induced inactivation. This chain is Photosystem II extrinsic protein U, found in Prochlorococcus marinus (strain MIT 9313).